Here is a 399-residue protein sequence, read N- to C-terminus: Mycinamicin VI 2''-O-methyltransferase (399 aa).

S-adenosyl-L-methionine is bound by residues threonine 173, 202-208 (EIGVGGY), serine 217, aspartate 234, 252-253 (DQ), and aspartate 275. Residue aspartate 275 participates in Mg(2+) binding. Histidine 278 functions as the Proton acceptor in the catalytic mechanism. Positions 303 and 304 each coordinate Mg(2+).

The protein belongs to the methyltransferase OleY/MycE family. As to quaternary structure, homotetramer. The cofactor is Mg(2+).

The enzyme catalyses mycinamicin VI + S-adenosyl-L-methionine = mycinamicin III + S-adenosyl-L-homocysteine + H(+). The protein operates within antibiotic biosynthesis; mycinamicin biosynthesis. In terms of biological role, O-methyltransferase that catalyzes the conversion of mycinamicin VI to mycinamicin III in the biosynthesis of mycinamicin, a 16-membered macrolide antibiotic. In Micromonospora griseorubida, this protein is Mycinamicin VI 2''-O-methyltransferase (mycE).